A 946-amino-acid chain; its full sequence is Inter-alpha-trypsin inhibitor heavy chain H2 (946 aa).

The signal sequence occupies residues 1 to 18 (MQRPVCLLIWLFLLEAQA). The propeptide occupies 19–54 (FEIPINGNSEFAEYSDLVELAPDKLPFVQENGRHQR). The 130-residue stretch at 56–185 (LPEESGEETD…KVQFELHYQE (130 aa)) folds into the VIT domain. Position 60 is a phosphoserine (Ser-60). N-linked (GlcNAc...) asparagine glycosylation is found at Asn-118 and Asn-263. 4-carboxyglutamate occurs at positions 282 and 283. The VWFA domain occupies 308-468 (PKNILFVIDV…YDFLKRLSNE (161 aa)). The N-linked (GlcNAc...) asparagine glycan is linked to Asn-445. At Ser-466 the chain carries Phosphoserine. At Asp-702 the chain carries Aspartate 1-(chondroitin 4-sulfate)-ester. The propeptide occupies 703-946 (PHFIIYLPKS…PQLYSFLKRP (244 aa)). Ser-886 bears the Phosphoserine mark.

This sequence belongs to the ITIH family. I-alpha-I plasma protease inhibitors are assembled from one or two heavy chains (HC) and one light chain, bikunin. Inter-alpha-inhibitor (I-alpha-I) is composed of ITIH1/HC1, ITIH2/HC2 and bikunin. Heavy chains are linked to bikunin via chondroitin 4-sulfate esterified to the alpha-carboxyl of the C-terminal aspartate after propeptide cleavage. Post-translationally, phosphorylated by FAM20C in the extracellular medium. As to expression, expressed in both liver and brain.

It localises to the secreted. Functionally, may act as a carrier of hyaluronan in serum or as a binding protein between hyaluronan and other matrix protein, including those on cell surfaces in tissues to regulate the localization, synthesis and degradation of hyaluronan which are essential to cells undergoing biological processes. The chain is Inter-alpha-trypsin inhibitor heavy chain H2 (Itih2) from Mus musculus (Mouse).